Here is a 150-residue protein sequence, read N- to C-terminus: Putative antitoxin VapB45 (150 aa).

Positions 124–150 are disordered; it reads AQRPVAAGRPRPRPQRPVSDRVSDQRR. Positions 141 to 150 are enriched in basic and acidic residues; that stretch reads VSDRVSDQRR.

Belongs to the phD/YefM antitoxin family.

Its function is as follows. Possibly the antitoxin component of a type II toxin-antitoxin (TA) system. Its cognate toxin is VapC45 (Potential). The chain is Putative antitoxin VapB45 (vapB45) from Mycobacterium tuberculosis (strain CDC 1551 / Oshkosh).